A 551-amino-acid chain; its full sequence is Urocanate hydratase (551 aa).

Residues 48 to 49 (GG), Q126, 172 to 174 (GMG), E192, R197, 238 to 239 (NA), 259 to 263 (QTSAH), 269 to 270 (YI), and Y318 each bind NAD(+). C406 is a catalytic residue. Residue G488 coordinates NAD(+).

This sequence belongs to the urocanase family. NAD(+) is required as a cofactor.

The protein localises to the cytoplasm. The enzyme catalyses 4-imidazolone-5-propanoate = trans-urocanate + H2O. It participates in amino-acid degradation; L-histidine degradation into L-glutamate; N-formimidoyl-L-glutamate from L-histidine: step 2/3. Functionally, catalyzes the conversion of urocanate to 4-imidazolone-5-propionate. The protein is Urocanate hydratase of Symbiobacterium thermophilum (strain DSM 24528 / JCM 14929 / IAM 14863 / T).